Here is a 467-residue protein sequence, read N- to C-terminus: UDP-N-acetylmuramate--L-alanine ligase (467 aa).

Residue 114-120 participates in ATP binding; sequence GTHGKTT.

It belongs to the MurCDEF family.

Its subcellular location is the cytoplasm. It carries out the reaction UDP-N-acetyl-alpha-D-muramate + L-alanine + ATP = UDP-N-acetyl-alpha-D-muramoyl-L-alanine + ADP + phosphate + H(+). It functions in the pathway cell wall biogenesis; peptidoglycan biosynthesis. Functionally, cell wall formation. In Rhodopseudomonas palustris (strain BisB18), this protein is UDP-N-acetylmuramate--L-alanine ligase.